The following is a 404-amino-acid chain: Lupus La protein homolog (404 aa).

The HTH La-type RNA-binding domain maps to 7 to 99; sequence NEKMAALEAK…RRSPSKPLPE (93 aa). 2 positions are modified to phosphoserine: Ser-92 and Ser-94. Residues 111–187 form the RRM domain; that stretch reads RSVYIKGFPT…TDLLILFKED (77 aa). Lys-116 carries the post-translational modification N6-acetyllysine. A Phosphothreonine modification is found at Thr-120. Lys-128 bears the N6-acetyllysine mark. Phosphoserine is present on Ser-225. The xRRM domain occupies 227–348; it reads EEKIGCLLKF…KGKGNKAAQA (122 aa). 2 positions are modified to N6-acetyllysine: Lys-328 and Lys-341. Over residues 329 to 342 the composition is skewed to basic residues; sequence WKSKGRRFKGKGKG. The segment at 329–404 is disordered; the sequence is WKSKGRRFKG…QKTENGAGDQ (76 aa). The span at 343–354 shows a compositional bias: low complexity; that stretch reads NKAAQAGSAKGK. Lys-360 bears the N6-acetyllysine mark. Thr-362 bears the Phosphothreonine mark. Ser-366 carries the phosphoserine modification. Positions 381–391 are enriched in basic and acidic residues; the sequence is RAREETDKEPP.

Interacts with DDX15. May interact with RUFY1. In terms of processing, phosphorylated in the C-terminal part of the protein.

Its subcellular location is the nucleus. Its function is as follows. Binds to the 3' poly(U) terminus of nascent RNA polymerase III transcripts, protecting them from exonuclease digestion and facilitating their folding and maturation. This Bos taurus (Bovine) protein is Lupus La protein homolog (SSB).